We begin with the raw amino-acid sequence, 141 residues long: Large ribosomal subunit protein uL11 (141 aa).

It belongs to the universal ribosomal protein uL11 family. In terms of assembly, part of the ribosomal stalk of the 50S ribosomal subunit. Interacts with L10 and the large rRNA to form the base of the stalk. L10 forms an elongated spine to which L12 dimers bind in a sequential fashion forming a multimeric L10(L12)X complex. In terms of processing, one or more lysine residues are methylated.

In terms of biological role, forms part of the ribosomal stalk which helps the ribosome interact with GTP-bound translation factors. The sequence is that of Large ribosomal subunit protein uL11 from Kosmotoga olearia (strain ATCC BAA-1733 / DSM 21960 / TBF 19.5.1).